The following is a 153-amino-acid chain: 6,7-dimethyl-8-ribityllumazine synthase 1 (153 aa).

5-amino-6-(D-ribitylamino)uracil contacts are provided by residues F16, 47-49 (ALE), and 76-78 (MVI). 81–82 (ET) is a binding site for (2S)-2-hydroxy-3-oxobutyl phosphate. The Proton donor role is filled by H84. N109 lines the 5-amino-6-(D-ribitylamino)uracil pocket. (2S)-2-hydroxy-3-oxobutyl phosphate is bound at residue R123.

Belongs to the DMRL synthase family.

The enzyme catalyses (2S)-2-hydroxy-3-oxobutyl phosphate + 5-amino-6-(D-ribitylamino)uracil = 6,7-dimethyl-8-(1-D-ribityl)lumazine + phosphate + 2 H2O + H(+). It participates in cofactor biosynthesis; riboflavin biosynthesis; riboflavin from 2-hydroxy-3-oxobutyl phosphate and 5-amino-6-(D-ribitylamino)uracil: step 1/2. Functionally, catalyzes the formation of 6,7-dimethyl-8-ribityllumazine by condensation of 5-amino-6-(D-ribitylamino)uracil with 3,4-dihydroxy-2-butanone 4-phosphate. This is the penultimate step in the biosynthesis of riboflavin. The protein is 6,7-dimethyl-8-ribityllumazine synthase 1 of Rhizobium meliloti (strain 1021) (Ensifer meliloti).